Consider the following 159-residue polypeptide: Ribosomal RNA large subunit methyltransferase H (159 aa).

Residues Leu76, Gly108, and 127-132 each bind S-adenosyl-L-methionine; that span reads FSHMTF.

The protein belongs to the RNA methyltransferase RlmH family. Homodimer.

It localises to the cytoplasm. It carries out the reaction pseudouridine(1915) in 23S rRNA + S-adenosyl-L-methionine = N(3)-methylpseudouridine(1915) in 23S rRNA + S-adenosyl-L-homocysteine + H(+). Functionally, specifically methylates the pseudouridine at position 1915 (m3Psi1915) in 23S rRNA. The chain is Ribosomal RNA large subunit methyltransferase H from Halothermothrix orenii (strain H 168 / OCM 544 / DSM 9562).